A 611-amino-acid chain; its full sequence is Chaperone protein DnaK (611 aa).

Thr-173 bears the Phosphothreonine; by autocatalysis mark. Residues 579–592 (AAGQAEGAQGAQDA) show a composition bias toward low complexity. Residues 579–611 (AAGQAEGAQGAQDAGAKKDNVVDAEFEEVKEDK) are disordered. Over residues 600–611 (VDAEFEEVKEDK) the composition is skewed to acidic residues.

This sequence belongs to the heat shock protein 70 family.

In terms of biological role, acts as a chaperone. In Bacillus mycoides (strain KBAB4) (Bacillus weihenstephanensis), this protein is Chaperone protein DnaK.